Reading from the N-terminus, the 297-residue chain is 4-hydroxy-tetrahydrodipicolinate synthase (297 aa).

A pyruvate-binding site is contributed by T47. Residue Y135 is the Proton donor/acceptor of the active site. The active-site Schiff-base intermediate with substrate is the K163. I205 is a pyruvate binding site.

This sequence belongs to the DapA family. Homotetramer; dimer of dimers.

The protein resides in the cytoplasm. It catalyses the reaction L-aspartate 4-semialdehyde + pyruvate = (2S,4S)-4-hydroxy-2,3,4,5-tetrahydrodipicolinate + H2O + H(+). Its pathway is amino-acid biosynthesis; L-lysine biosynthesis via DAP pathway; (S)-tetrahydrodipicolinate from L-aspartate: step 3/4. In terms of biological role, catalyzes the condensation of (S)-aspartate-beta-semialdehyde [(S)-ASA] and pyruvate to 4-hydroxy-tetrahydrodipicolinate (HTPA). In Cytophaga hutchinsonii (strain ATCC 33406 / DSM 1761 / CIP 103989 / NBRC 15051 / NCIMB 9469 / D465), this protein is 4-hydroxy-tetrahydrodipicolinate synthase.